The sequence spans 139 residues: Sec-independent protein translocase protein TatB (139 aa).

A helical transmembrane segment spans residues 1-21; it reads MFDIGFTELLLVGLVALMVLG. The segment at 69 to 139 is disordered; it reads LDLEREMKQS…PLRSDRPSEP (71 aa). The segment covering 80 to 95 has biased composition (pro residues); sequence MPPPASNPAATPPSPP.

It belongs to the TatB family. As to quaternary structure, the Tat system comprises two distinct complexes: a TatABC complex, containing multiple copies of TatA, TatB and TatC subunits, and a separate TatA complex, containing only TatA subunits. Substrates initially bind to the TatABC complex, which probably triggers association of the separate TatA complex to form the active translocon.

The protein localises to the cell inner membrane. Functionally, part of the twin-arginine translocation (Tat) system that transports large folded proteins containing a characteristic twin-arginine motif in their signal peptide across membranes. Together with TatC, TatB is part of a receptor directly interacting with Tat signal peptides. TatB may form an oligomeric binding site that transiently accommodates folded Tat precursor proteins before their translocation. This Stutzerimonas stutzeri (strain A1501) (Pseudomonas stutzeri) protein is Sec-independent protein translocase protein TatB.